The sequence spans 337 residues: Putative transcription activator protein HfaB (337 aa).

Over residues 303 to 313 (AYNNLGTNNAQ) the composition is skewed to polar residues. Residues 303–337 (AYNNLGTNNAQTRDDPSRWNARRDPDIRDAKRGRY) are disordered. The segment covering 314 to 337 (TRDDPSRWNARRDPDIRDAKRGRY) has biased composition (basic and acidic residues).

Functionally, required for the attachment of the holdfast to the cell. May be involved in the positive regulation of hfaC. The chain is Putative transcription activator protein HfaB (hfaB) from Caulobacter vibrioides (strain ATCC 19089 / CIP 103742 / CB 15) (Caulobacter crescentus).